Consider the following 340-residue polypeptide: Gallate dioxygenase (340 aa).

The active-site Proton donor is histidine 45. The active-site Proton acceptor is the histidine 113.

The protein belongs to the LigB/MhpB extradiol dioxygenase family. It depends on Fe(2+) as a cofactor.

The enzyme catalyses 3,4,5-trihydroxybenzoate + O2 = (1E)-4-oxobut-1-ene-1,2,4-tricarboxylate + 2 H(+). Functionally, ring-cleavage dioxygenase that acts specifically on gallate to produce the keto-tautomer of 4-oxalomesaconate. Mediates the first step of gallate degradation pathway. The polypeptide is Gallate dioxygenase (galA) (Pseudomonas putida (strain ATCC 47054 / DSM 6125 / CFBP 8728 / NCIMB 11950 / KT2440)).